Consider the following 554-residue polypeptide: Bifunctional epoxide hydrolase 2 (554 aa).

The tract at residues 1–224 (MALRVAAFDL…KVTGTQFPEA (224 aa)) is phosphatase. Residues Asp-9 and Asp-11 each coordinate Mg(2+). Lys-55 carries the N6-succinyllysine modification. 123-124 (TN) is a binding site for phosphate. The residue at position 176 (Lys-176) is an N6-acetyllysine; alternate. An N6-succinyllysine; alternate modification is found at Lys-176. Asp-185 contributes to the Mg(2+) binding site. Lys-191 and Lys-215 each carry N6-acetyllysine. The epoxide hydrolase stretch occupies residues 233 to 554 (NDVSHGYVTV…IQNPSVTSKI (322 aa)). One can recognise an AB hydrolase-1 domain in the interval 257-530 (PAICLCHGFP…CGHWTQIEKP (274 aa)). Asp-333 functions as the Nucleophile in the catalytic mechanism. Ser-368 carries the post-translational modification Phosphoserine. Tyr-381 is a binding site for substrate. N6-succinyllysine is present on residues Lys-420 and Lys-454. The Proton donor role is filled by Tyr-465. Lys-504 carries the N6-succinyllysine modification. Cys-521 is lipidated: S-(15-deoxy-Delta12,14-prostaglandin J2-9-yl)cysteine. His-523 functions as the Proton acceptor in the catalytic mechanism. The Microbody targeting signal signature appears at 552–554 (SKI). N6-succinyllysine is present on Lys-553.

It belongs to the AB hydrolase superfamily. Epoxide hydrolase family. Homodimer. Mg(2+) is required as a cofactor. Post-translationally, the covalent modification of cysteine by 15-deoxy-Delta12,14-prostaglandin-J2 is autocatalytic and reversible. It may occur as an alternative to other cysteine modifications, such as S-nitrosylation and S-palmitoylation.

The protein resides in the cytoplasm. Its subcellular location is the peroxisome. The enzyme catalyses an epoxide + H2O = an ethanediol. It carries out the reaction (9S,10S)-10-hydroxy-9-(phosphooxy)octadecanoate + H2O = (9S,10S)-9,10-dihydroxyoctadecanoate + phosphate. The catalysed reaction is 8-hydroxy-(11S,12S)-epoxy-(5Z,9E,14Z)-eicosatrienoate + H2O = (8,11R,12S)-trihydroxy-(5Z,9E,14Z)-eicosatrienoate. It catalyses the reaction 10-hydroxy-(11S,12S)-epoxy- (5Z,8Z,14Z)-eicosatrienoate + H2O = (10,11S,12R)-trihydroxy-(5Z,8Z,14Z)-eicosatrienoate. The enzyme catalyses 12-phosphooxy-(9Z)-octadecenoate + H2O = 12-hydroxy-(9Z)-octadecenoate + phosphate. It carries out the reaction 12-phosphooxy-(9E)-octadecenoate + H2O = 12-hydroxy-(9E)-octadecenoate + phosphate. The catalysed reaction is 12-(phosphooxy)octadecanoate + H2O = 12-hydroxyoctadecanoate + phosphate. It catalyses the reaction 8,9-epoxy-(5Z,11Z,14Z)-eicosatrienoate + H2O = 8,9-dihydroxy-(5Z,11Z,14Z)-eicosatrienoate. The enzyme catalyses 11,12-epoxy-(5Z,8Z,14Z)-eicosatrienoate + H2O = 11,12-dihydroxy-(5Z,8Z,14Z)-eicosatrienoate. It carries out the reaction 14,15-epoxy-(5Z,8Z,11Z)-eicosatrienoate + H2O = 14,15-dihydroxy-(5Z,8Z,11Z)-eicosatrienoate. The catalysed reaction is 9,10-epoxy-(12Z)-octadecenoate + H2O = 9,10-dihydroxy-(12Z)-octadecenoate. It catalyses the reaction 1-tetradecanoyl-sn-glycerol 3-phosphate + H2O = 1-tetradecanoyl-sn-glycerol + phosphate. The enzyme catalyses 1-octadecanoyl-sn-glycero-3-phosphate + H2O = 1-octadecanoyl-sn-glycerol + phosphate. It carries out the reaction 1-(5Z,8Z,11Z,14Z-eicosatetraenoyl)-sn-glycero-3-phosphate + H2O = 1-(5Z,8Z,11Z,14Z-eicosatetraenoyl)-sn-glycerol + phosphate. The catalysed reaction is 1-hexadecanoyl-sn-glycero-3-phosphate + H2O = 1-hexadecanoyl-sn-glycerol + phosphate. It catalyses the reaction 1-(9Z-octadecenoyl)-sn-glycero-3-phosphate + H2O = 1-(9Z-octadecenoyl)-sn-glycerol + phosphate. The enzyme catalyses (8S,9R)-epoxy-(5Z,11Z,14Z)-eicosatrienoate + H2O = (8S,9S)-dihydroxy-(5Z,11Z,14Z)-eicosatrienoate. It carries out the reaction (11S,12R)-epoxy-(5Z,8Z,14Z)-eicosatrienoate + H2O = (11R,12R)-dihydroxy-(5Z,8Z,14Z)-eicosatrienoate. The catalysed reaction is (11S,12R)-epoxy-(5Z,8Z,14Z)-eicosatrienoate + H2O = (11S,12S)-dihydroxy-(5Z,8Z,14Z)-eicosatrienoate. It catalyses the reaction (14S,15R)-epoxy-(5Z,8Z,11Z)-eicosatrienoate + H2O = (14R,15R)-dihydroxy-(5Z,8Z,11Z)-eicosatrienoate. The enzyme catalyses (14S,15R)-epoxy-(5Z,8Z,11Z)-eicosatrienoate + H2O = (14S,15S)-dihydroxy-(5Z,8Z,11Z)-eicosatrienoate. It carries out the reaction (11R,12S)-epoxy-(5Z,8Z,14Z)-eicosatrienoate + H2O = (11S,12S)-dihydroxy-(5Z,8Z,14Z)-eicosatrienoate. The catalysed reaction is (11R,12S)-epoxy-(5Z,8Z,14Z)-eicosatrienoate + H2O = (11R,12R)-dihydroxy-(5Z,8Z,14Z)-eicosatrienoate. It catalyses the reaction (8S,9R)-epoxy-(5Z,11Z,14Z)-eicosatrienoate + H2O = (8R,9R)-dihydroxy-(5Z,11Z,14Z)-eicosatrienoate. The enzyme catalyses (14R,15S)-epoxy-(5Z,8Z,11Z)-eicosatrienoate + H2O = (14R,15R)-dihydroxy-(5Z,8Z,11Z)-eicosatrienoate. Its activity is regulated as follows. Inhibited by 1-(1-acetylpiperidin-4-yl)-3-(4-(trifl uoromethoxy)phenyl)urea (TPAU), 1-cyclohexyl-3-dodecylurea (CDU), 12-(3-adamantan-1-yl-ureido)-dodecanoic acid (AUDA), 1-((3S, 5S, 7S)-adamantan-1-yl)-3-(5-(2-(2-ethoxyethoxy) ethoxy)pentyl)urea (AEPU), N-adamantyl-N[']-cyclohexyl urea (ACU), 4-(((1S, 4S)-4-(3-((3S, 5S, 7S)-adamantan-1-yl) ureido)cyclohexyl)oxy)benzoic acid (c-AUCB), 4-(((1R, 4R)-4-(3-((3S, 5S, 7S)-adamantan-1-yl)ureido)cyclohexyl)oxy)benzoic acid (t-AUCB), 4-(((1R, 4R)-4-(3-(4(trifluoromethoxy)phenyl)ureido)cyclohexyl)oxy)benzoic acid (t-TAUCB) and to a lesser extent by 8-(3-((3S, 5S, 7S)-adamantan-1-yl)ureido) octanoic acid (AUOA). Phosphatase activity is inhibited by dodecyl-phosphate, phospholipids such as phospho-lysophosphatidic acids and fatty acids such as palmitic acid and lauric acid. Functionally, bifunctional enzyme. The C-terminal domain has epoxide hydrolase activity and acts on epoxides (alkene oxides, oxiranes) and arene oxides. Plays a role in xenobiotic metabolism by degrading potentially toxic epoxides. Also determines steady-state levels of physiological mediators. The N-terminal domain has lipid phosphatase activity, with the highest activity towards threo-9,10-phosphonooxy-hydroxy-octadecanoic acid, followed by erythro-9,10-phosphonooxy-hydroxy-octadecanoic acid, 12-phosphonooxy-octadec-9Z-enoic acid and 12-phosphonooxy-octadec-9E-enoic acid. In terms of biological role, bifunctional enzyme. The C-terminal domain has epoxide hydrolase activity and acts on epoxides (alkene oxides, oxiranes) and arene oxides. Plays a role in xenobiotic metabolism by degrading potentially toxic epoxides. Also determines steady-state levels of physiological mediators. Its function is as follows. Bifunctional enzyme. The N-terminal domain has lipid phosphatase activity, with the highest activity towards threo-9,10-phosphonooxy-hydroxy-octadecanoic acid, followed by erythro-9,10-phosphonooxy-hydroxy-octadecanoic acid, 12-phosphonooxy-octadec-9Z-enoic acid and 12-phosphonooxy-octadec-9E-enoic acid. Has phosphatase activity toward lyso-glycerophospholipids with also some lower activity toward lysolipids of sphingolipid and isoprenoid phosphates. The polypeptide is Bifunctional epoxide hydrolase 2 (Rattus norvegicus (Rat)).